A 94-amino-acid polypeptide reads, in one-letter code: Putative protein P2 (94 aa).

One can recognise an HTH cro/C1-type domain in the interval 27-88 (IVQALLAQGL…ATNSFSTSRL (62 aa)). Positions 38 to 57 (QSEIEANTGIKQPSISRILT) form a DNA-binding region, H-T-H motif.

The sequence is that of Putative protein P2 (2) from Escherichia coli (Bacteriophage APSE-1).